The sequence spans 250 residues: MYKLVLIRHGESQWNLENRFTGWTDVDLTETGREQARKAGELLKREGYAFDLAYTSVLKRAIRTLWIALDALDAMYTPVGINWRLNERHYGQLQGLNKAETAAKYGDEQVLIWRRAYAIAPEPLDLEDPRHPRFDGRYAKIPADQLPATECLKDTVARVLPFWNESIAPAIRAGRRVLVAAHGNSLRALIKHLDNVSDDDIVGVNIPTGQPLVYELDEDLKPIRHYYLGDAAEIEAAMAAVAAQGKAKKD.

Substrate contacts are provided by residues 8 to 15 (RHGESQWN), 21 to 22 (TG), arginine 60, 87 to 90 (ERHY), lysine 98, 114 to 115 (RR), and 183 to 184 (GN). Catalysis depends on histidine 9, which acts as the Tele-phosphohistidine intermediate. Glutamate 87 functions as the Proton donor/acceptor in the catalytic mechanism.

The protein belongs to the phosphoglycerate mutase family. BPG-dependent PGAM subfamily. As to quaternary structure, homodimer.

The catalysed reaction is (2R)-2-phosphoglycerate = (2R)-3-phosphoglycerate. Its pathway is carbohydrate degradation; glycolysis; pyruvate from D-glyceraldehyde 3-phosphate: step 3/5. In terms of biological role, catalyzes the interconversion of 2-phosphoglycerate and 3-phosphoglycerate. The polypeptide is 2,3-bisphosphoglycerate-dependent phosphoglycerate mutase (Bordetella parapertussis (strain 12822 / ATCC BAA-587 / NCTC 13253)).